The primary structure comprises 275 residues: Adaptin ear-binding coat-associated protein 1 (275 aa).

The tract at residues 168-275 is disordered; that stretch reads AKKGGASKPR…APQPSNWVQF (108 aa). A compositionally biased stretch (pro residues) spans 187-201; it reads LPPPPGGKVTIPPPS. T211 bears the Phosphothreonine mark. A compositionally biased stretch (low complexity) spans 233 to 248; sequence SPAPVSTSAPAPVSTS. Short sequence motifs (WXXF motif) lie at residues 252 to 255 and 272 to 275; these read WGDF and WVQF. Over residues 256-275 the composition is skewed to polar residues; sequence STASSSVPNQAPQPSNWVQF.

This sequence belongs to the NECAP family. As to quaternary structure, interacts with AP1G1 and AP2A1 components of the adapter protein complexes AP-1 and AP-2. Interacts with the GAE domain proteins GGA1, GGA2 and GGA3. In terms of tissue distribution, expressed primarily in brain (at protein level).

The protein resides in the cytoplasmic vesicle. Its subcellular location is the clathrin-coated vesicle membrane. It is found in the cell membrane. Functionally, involved in endocytosis. The protein is Adaptin ear-binding coat-associated protein 1 (Necap1) of Mus musculus (Mouse).